The primary structure comprises 152 residues: Deoxyuridine 5'-triphosphate nucleotidohydrolase (152 aa).

Residues 71 to 73, Asn-84, 88 to 90, and Met-98 contribute to the substrate site; these read RSG and LID.

This sequence belongs to the dUTPase family. Mg(2+) serves as cofactor.

The catalysed reaction is dUTP + H2O = dUMP + diphosphate + H(+). It functions in the pathway pyrimidine metabolism; dUMP biosynthesis; dUMP from dCTP (dUTP route): step 2/2. This enzyme is involved in nucleotide metabolism: it produces dUMP, the immediate precursor of thymidine nucleotides and it decreases the intracellular concentration of dUTP so that uracil cannot be incorporated into DNA. This chain is Deoxyuridine 5'-triphosphate nucleotidohydrolase, found in Shewanella piezotolerans (strain WP3 / JCM 13877).